Here is a 247-residue protein sequence, read N- to C-terminus: 2,3-bisphosphoglycerate-dependent phosphoglycerate mutase (247 aa).

Substrate contacts are provided by residues 8 to 15 (RHGESTWN), 21 to 22 (TG), Arg60, 87 to 90 (ERHY), Lys98, 114 to 115 (RR), and 183 to 184 (GN). The active-site Tele-phosphohistidine intermediate is the His9. Catalysis depends on Glu87, which acts as the Proton donor/acceptor.

Belongs to the phosphoglycerate mutase family. BPG-dependent PGAM subfamily. As to quaternary structure, homodimer.

It catalyses the reaction (2R)-2-phosphoglycerate = (2R)-3-phosphoglycerate. Its pathway is carbohydrate degradation; glycolysis; pyruvate from D-glyceraldehyde 3-phosphate: step 3/5. Catalyzes the interconversion of 2-phosphoglycerate and 3-phosphoglycerate. The polypeptide is 2,3-bisphosphoglycerate-dependent phosphoglycerate mutase (Albidiferax ferrireducens (strain ATCC BAA-621 / DSM 15236 / T118) (Rhodoferax ferrireducens)).